Reading from the N-terminus, the 360-residue chain is Phospho-N-acetylmuramoyl-pentapeptide-transferase (360 aa).

The next 10 membrane-spanning stretches (helical) occupy residues 27 to 47, 71 to 91, 93 to 113, 128 to 148, 168 to 188, 199 to 219, 239 to 259, 262 to 282, 288 to 308, and 337 to 357; these read GAMITSALIVFLFGPTIINSL, TPTMGGLMIMTGILASCLLWA, LASVYVWVVLMVSVGFGAIGF, FSGKARLGIEFLIAAIAAFTI, LVINLSWFFIPFAAFVMVGAG, GLAIVPVMVAAASFGFIAYLS, LAVVLGAVIGAGLGFLWFNAP, AIFMGDTGSLALGGMLGTVAV, IVLAIIGGLFVMEALSVIIQV, and QVVIRFWIVAIILAMIGLSTL.

This sequence belongs to the glycosyltransferase 4 family. MraY subfamily. The cofactor is Mg(2+).

It is found in the cell inner membrane. The catalysed reaction is UDP-N-acetyl-alpha-D-muramoyl-L-alanyl-gamma-D-glutamyl-meso-2,6-diaminopimeloyl-D-alanyl-D-alanine + di-trans,octa-cis-undecaprenyl phosphate = di-trans,octa-cis-undecaprenyl diphospho-N-acetyl-alpha-D-muramoyl-L-alanyl-D-glutamyl-meso-2,6-diaminopimeloyl-D-alanyl-D-alanine + UMP. The protein operates within cell wall biogenesis; peptidoglycan biosynthesis. Functionally, catalyzes the initial step of the lipid cycle reactions in the biosynthesis of the cell wall peptidoglycan: transfers peptidoglycan precursor phospho-MurNAc-pentapeptide from UDP-MurNAc-pentapeptide onto the lipid carrier undecaprenyl phosphate, yielding undecaprenyl-pyrophosphoryl-MurNAc-pentapeptide, known as lipid I. This Brucella abortus (strain S19) protein is Phospho-N-acetylmuramoyl-pentapeptide-transferase.